The chain runs to 339 residues: DNA-directed RNA polymerase subunit alpha (339 aa).

Positions methionine 1–aspartate 235 are alpha N-terminal domain (alpha-NTD). Positions phenylalanine 251–phenylalanine 339 are alpha C-terminal domain (alpha-CTD).

It belongs to the RNA polymerase alpha chain family. In terms of assembly, homodimer. The RNAP catalytic core consists of 2 alpha, 1 beta, 1 beta' and 1 omega subunit. When a sigma factor is associated with the core the holoenzyme is formed, which can initiate transcription.

The enzyme catalyses RNA(n) + a ribonucleoside 5'-triphosphate = RNA(n+1) + diphosphate. Its function is as follows. DNA-dependent RNA polymerase catalyzes the transcription of DNA into RNA using the four ribonucleoside triphosphates as substrates. This chain is DNA-directed RNA polymerase subunit alpha, found in Gluconacetobacter diazotrophicus (strain ATCC 49037 / DSM 5601 / CCUG 37298 / CIP 103539 / LMG 7603 / PAl5).